The following is a 260-amino-acid chain: Ribosomal RNA small subunit methyltransferase J (260 aa).

S-adenosyl-L-methionine-binding positions include Glu-125–Arg-126 and Asp-179.

The protein belongs to the methyltransferase superfamily. RsmJ family.

It is found in the cytoplasm. It carries out the reaction guanosine(1516) in 16S rRNA + S-adenosyl-L-methionine = N(2)-methylguanosine(1516) in 16S rRNA + S-adenosyl-L-homocysteine + H(+). In terms of biological role, specifically methylates the guanosine in position 1516 of 16S rRNA. This is Ribosomal RNA small subunit methyltransferase J from Pseudomonas fluorescens (strain Pf0-1).